Reading from the N-terminus, the 376-residue chain is Probable tRNA sulfurtransferase (376 aa).

A THUMP domain is found at 51-152 (EENLKNLKYV…KNSVYVFDKS (102 aa)). Residues 170–171 (LI), 195–196 (TF), R252, G274, and Q283 contribute to the ATP site.

It belongs to the ThiI family.

The protein resides in the cytoplasm. It carries out the reaction [ThiI sulfur-carrier protein]-S-sulfanyl-L-cysteine + a uridine in tRNA + 2 reduced [2Fe-2S]-[ferredoxin] + ATP + H(+) = [ThiI sulfur-carrier protein]-L-cysteine + a 4-thiouridine in tRNA + 2 oxidized [2Fe-2S]-[ferredoxin] + AMP + diphosphate. The catalysed reaction is [ThiS sulfur-carrier protein]-C-terminal Gly-Gly-AMP + S-sulfanyl-L-cysteinyl-[cysteine desulfurase] + AH2 = [ThiS sulfur-carrier protein]-C-terminal-Gly-aminoethanethioate + L-cysteinyl-[cysteine desulfurase] + A + AMP + 2 H(+). It functions in the pathway cofactor biosynthesis; thiamine diphosphate biosynthesis. Catalyzes the ATP-dependent transfer of a sulfur to tRNA to produce 4-thiouridine in position 8 of tRNAs, which functions as a near-UV photosensor. Also catalyzes the transfer of sulfur to the sulfur carrier protein ThiS, forming ThiS-thiocarboxylate. This is a step in the synthesis of thiazole, in the thiamine biosynthesis pathway. The sulfur is donated as persulfide by IscS. The protein is Probable tRNA sulfurtransferase of Mycoplasmopsis synoviae (strain 53) (Mycoplasma synoviae).